The following is a 279-amino-acid chain: DegV domain-containing protein SAR1438 (279 aa).

One can recognise a DegV domain in the interval 4-278 (QIIVTDSTSD…QGAIGLVVLK (275 aa)). Hexadecanoate contacts are provided by T61 and S93.

Functionally, may bind long-chain fatty acids, such as palmitate, and may play a role in lipid transport or fatty acid metabolism. The protein is DegV domain-containing protein SAR1438 of Staphylococcus aureus (strain MRSA252).